The primary structure comprises 61 residues: ATP synthase F(0) complex subunit 8 (61 aa).

The chain crosses the membrane as a helical span at residues 10–32; the sequence is FMILSSTWLIYTIILQPKILSHL.

Belongs to the ATPase protein 8 family. Component of the ATP synthase complex composed at least of ATP5F1A/subunit alpha, ATP5F1B/subunit beta, ATP5MC1/subunit c (homooctomer), MT-ATP6/subunit a, MT-ATP8/subunit 8, ATP5ME/subunit e, ATP5MF/subunit f, ATP5MG/subunit g, ATP5MK/subunit k, ATP5MJ/subunit j, ATP5F1C/subunit gamma, ATP5F1D/subunit delta, ATP5F1E/subunit epsilon, ATP5PF/subunit F6, ATP5PB/subunit b, ATP5PD/subunit d, ATP5PO/subunit OSCP. ATP synthase complex consists of a soluble F(1) head domain (subunits alpha(3) and beta(3)) - the catalytic core - and a membrane F(0) domain - the membrane proton channel (subunits c, a, 8, e, f, g, k and j). These two domains are linked by a central stalk (subunits gamma, delta, and epsilon) rotating inside the F1 region and a stationary peripheral stalk (subunits F6, b, d, and OSCP).

The protein localises to the mitochondrion membrane. In terms of biological role, subunit 8, of the mitochondrial membrane ATP synthase complex (F(1)F(0) ATP synthase or Complex V) that produces ATP from ADP in the presence of a proton gradient across the membrane which is generated by electron transport complexes of the respiratory chain. ATP synthase complex consist of a soluble F(1) head domain - the catalytic core - and a membrane F(1) domain - the membrane proton channel. These two domains are linked by a central stalk rotating inside the F(1) region and a stationary peripheral stalk. During catalysis, ATP synthesis in the catalytic domain of F(1) is coupled via a rotary mechanism of the central stalk subunits to proton translocation. In vivo, can only synthesize ATP although its ATP hydrolase activity can be activated artificially in vitro. Part of the complex F(0) domain. The sequence is that of ATP synthase F(0) complex subunit 8 from Chelonia mydas (Green sea-turtle).